A 418-amino-acid chain; its full sequence is Endoglucanase EG-II (418 aa).

Residues 1–21 (MNKSVAPLLLAASILYGGAVA) form the signal peptide. Glutamine 22 is subject to Pyrrolidone carboxylic acid. The CBM1 domain maps to 22–57 (QQTVWGQCGGIGWSGPTNCAPGSACSTLNPYYAQCI). The tract at residues 58 to 91 (PGATTITTSTRPPSGPTTTTRATSTSSSTPPTSS) is linker. Positions 63 to 91 (ITTSTRPPSGPTTTTRATSTSSSTPPTSS) are disordered. The interval 92–418 (GVRFAGVNIA…SLVSSCLARK (327 aa)) is catalytic. Cysteine 107 and cysteine 113 form a disulfide bridge. The N-linked (GlcNAc) asparagine glycan is linked to asparagine 124. Cysteine 183 and cysteine 190 are joined by a disulfide. The active-site Proton donor/acceptor is the glutamate 239. Cystine bridges form between cysteine 323/cysteine 359 and cysteine 364/cysteine 414. Glutamate 350 serves as the catalytic Nucleophile.

Belongs to the glycosyl hydrolase 5 (cellulase A) family.

It is found in the secreted. The enzyme catalyses Endohydrolysis of (1-&gt;4)-beta-D-glucosidic linkages in cellulose, lichenin and cereal beta-D-glucans.. Functionally, endoglucanase (EG) that cleaves the internal beta-1,4-glucosidic bonds in cellulose. The degradation of cellulose involves an interplay between different cellulolytic enzymes. Hydrolysis starts with EGs, which cut internal glycosidic linkages to reduce the polymerization degree of the substrate and creates new chain ends for exocellobiohydrolases (CBHs). The CBH release the disaccharide cellobiose from the non-reducing end of the cellulose polymer chain. Finally, beta-1,4-glucosidases hydrolyze the cellobiose and other short cello-oligosaccharides into glucose units. The chain is Endoglucanase EG-II (egl2) from Hypocrea jecorina (Trichoderma reesei).